Consider the following 108-residue polypeptide: Ig kappa chain V-VI region NQ2-6.1 (108 aa).

The segment at 1–23 (QILLTQSPAIMSASPGQKVTMTC) is framework-1. Cys23 and Cys87 are disulfide-bonded. The interval 24–33 (SASSSVSYMY) is complementarity-determining-1. The tract at residues 34–48 (WYQQKPGSSPRLLIY) is framework-2. Residues 49–55 (DTSNLAS) are complementarity-determining-2. Residues 56 to 87 (GVPVRFSGSGSATSYSLTITRMQAEDAATYYC) are framework-3. A complementarity-determining-3 region spans residues 88 to 98 (QQWSSYPPMLT). The tract at residues 99 to 108 (FGAGTKLELK) is framework-4.

This is Ig kappa chain V-VI region NQ2-6.1 from Mus musculus (Mouse).